Reading from the N-terminus, the 485-residue chain is DNA polymerase subunit gamma-2 (485 aa).

The disordered stretch occupies residues 28 to 65; sequence GQPELLTERSSPKGGHVKSHAELEGNGEHPEAPGSGEG. Ser-38 is subject to Phosphoserine. The segment covering 46 to 58 has biased composition (basic and acidic residues); sequence SHAELEGNGEHPE.

Heterotrimer composed of a catalytic subunit and a homodimer of accessory subunits (POLG:POLG2).

Its subcellular location is the mitochondrion. It localises to the mitochondrion matrix. The protein localises to the mitochondrion nucleoid. Functionally, accessory subunit of DNA polymerase gamma solely responsible for replication of mitochondrial DNA (mtDNA). Acts as an allosteric regulator of the holoenzyme activities. Enhances the polymerase activity and the processivity of POLG by increasing its interactions with the DNA template. Suppresses POLG exonucleolytic proofreading especially toward homopolymeric templates bearing mismatched termini. Binds to single-stranded DNA. This chain is DNA polymerase subunit gamma-2, found in Homo sapiens (Human).